A 178-amino-acid polypeptide reads, in one-letter code: MLIALTGTPGTGKSSVAERLRERGYKVATVVELAEKHGCIIDEEDGEIVIDVESLAARIDFEGIVEGHLSHLLKPDVAIVLRCNPAVLRERLKGRNWSEEKLLENLEAEMLDVILVEALEHASEVYEIDTTEMSLEEVIEAVEAIIRGDREARKRYKPGGIDWLSELEDRIEEFMRKV.

Residues Gly10, Gly12, Lys13, Ser14, and Ser15 each contribute to the ATP site. Positions 29 to 50 (TVVELAEKHGCIIDEEDGEIVI) are NMP. Residues 94–104 (GRNWSEEKLLE) form an LID region. Arg95 lines the ATP pocket.

It belongs to the adenylate kinase family. AK6 subfamily. As to quaternary structure, interacts with uS11. Not a structural component of 40S pre-ribosomes, but transiently interacts with them by binding to uS11.

The enzyme catalyses AMP + ATP = 2 ADP. The catalysed reaction is ATP + H2O = ADP + phosphate + H(+). Broad-specificity nucleoside monophosphate (NMP) kinase that catalyzes the reversible transfer of the terminal phosphate group between nucleoside triphosphates and monophosphates. Also has ATPase activity. Involved in the late maturation steps of the 30S ribosomal particles, specifically 16S rRNA maturation. While NMP activity is not required for ribosome maturation, ATPase activity is. Associates transiently with small ribosomal subunit protein uS11. ATP hydrolysis breaks the interaction with uS11. May temporarily remove uS11 from the ribosome to enable a conformational change of the ribosomal RNA that is needed for the final maturation step of the small ribosomal subunit. This chain is Putative adenylate kinase, found in Archaeoglobus fulgidus (strain ATCC 49558 / DSM 4304 / JCM 9628 / NBRC 100126 / VC-16).